A 162-amino-acid chain; its full sequence is Gas vesicle protein I (162 aa).

Residues 1 to 162 (MTGKQHQKHE…AERQRGGADE (162 aa)) form a disordered region. Basic and acidic residues-rich tracts occupy residues 22 to 37 (INRDKARSKLLRQREK) and 47 to 64 (RQSEVRRGNQSKAQHDTQ). Composition is skewed to polar residues over residues 65–74 (SETQRGTQSK) and 81–110 (TGGTKNPTAHSTLPPQKTNAENAVRNSHST). Basic and acidic residues-rich tracts occupy residues 122–142 (ARERLYGLRLHRETTASEDKS) and 151–162 (PKAERQRGGADE).

This sequence belongs to the gas vesicle GvpI family. GvpF to GvpM interact with each other in vitro, and may form multi-subunit complex(es). Interacts with GvpC and GvpO.

The protein resides in the gas vesicle. Its function is as follows. Proteins GvpF to GvpM might be involved in nucleating gas vesicle formation. A minor component of the gas vesicle. Gas vesicles are hollow, gas filled proteinaceous nanostructures found in some microorganisms. They allow positioning of halobacteria at the optimal depth for growth in the poorly aerated, shallow brine pools of their habitat. Expression of a 9.5 kb mc-vac DNA fragment containing 2 divergently transcribed regions (gvpD-gvpE-gvpF-gvpG-gvpH-gvpI-gvpJ-gvpK-gvpL-gvpM and gvpA-gvpC-gvpN-gvpO) allows H.volcanii to produce gas vesicles. This Haloferax mediterranei (strain ATCC 33500 / DSM 1411 / JCM 8866 / NBRC 14739 / NCIMB 2177 / R-4) (Halobacterium mediterranei) protein is Gas vesicle protein I.